Here is a 190-residue protein sequence, read N- to C-terminus: Ribonuclease HII (190 aa).

Positions 1-190 (MAGVDEVGRG…FCRKIIENPD (190 aa)) constitute an RNase H type-2 domain. 3 residues coordinate a divalent metal cation: Asp5, Glu6, and Asp101.

This sequence belongs to the RNase HII family. Requires Mn(2+) as cofactor. It depends on Mg(2+) as a cofactor.

It localises to the cytoplasm. It catalyses the reaction Endonucleolytic cleavage to 5'-phosphomonoester.. Its function is as follows. Endonuclease that specifically degrades the RNA of RNA-DNA hybrids. This is Ribonuclease HII (rnhB) from Synechocystis sp. (strain ATCC 27184 / PCC 6803 / Kazusa).